The chain runs to 709 residues: Probable lanosterol 14-alpha demethylase (709 aa).

Cysteine 425 contacts heme.

It belongs to the cytochrome P450 family. The cofactor is heme.

The protein resides in the membrane. It carries out the reaction a 14alpha-methyl steroid + 3 reduced [NADPH--hemoprotein reductase] + 3 O2 = a Delta(14) steroid + formate + 3 oxidized [NADPH--hemoprotein reductase] + 4 H2O + 4 H(+). The protein operates within steroid biosynthesis; zymosterol biosynthesis; zymosterol from lanosterol: step 1/6. Its function is as follows. Catalyzes the 14-alpha demethylation of obtusifoliol to 4 alpha-methyl-5 alpha-ergosta-8,14,24(28)-trien-3 beta-ol. This chain is Probable lanosterol 14-alpha demethylase, found in Acanthamoeba polyphaga (Amoeba).